We begin with the raw amino-acid sequence, 222 residues long: Probable nicotinate-nucleotide adenylyltransferase (222 aa).

Belongs to the NadD family.

It carries out the reaction nicotinate beta-D-ribonucleotide + ATP + H(+) = deamido-NAD(+) + diphosphate. Its pathway is cofactor biosynthesis; NAD(+) biosynthesis; deamido-NAD(+) from nicotinate D-ribonucleotide: step 1/1. Its function is as follows. Catalyzes the reversible adenylation of nicotinate mononucleotide (NaMN) to nicotinic acid adenine dinucleotide (NaAD). This Pseudomonas syringae pv. tomato (strain ATCC BAA-871 / DC3000) protein is Probable nicotinate-nucleotide adenylyltransferase.